Here is a 110-residue protein sequence, read N- to C-terminus: Cell cycle protein GpsB (110 aa).

The stretch at Leu32–Ser73 forms a coiled coil.

It belongs to the GpsB family. In terms of assembly, forms polymers through the coiled coil domains. Interacts with PBP1, MreC and EzrA.

The protein resides in the cytoplasm. Functionally, divisome component that associates with the complex late in its assembly, after the Z-ring is formed, and is dependent on DivIC and PBP2B for its recruitment to the divisome. Together with EzrA, is a key component of the system that regulates PBP1 localization during cell cycle progression. Its main role could be the removal of PBP1 from the cell pole after pole maturation is completed. Also contributes to the recruitment of PBP1 to the division complex. Not essential for septum formation. This chain is Cell cycle protein GpsB, found in Streptococcus agalactiae serotype Ia (strain ATCC 27591 / A909 / CDC SS700).